The sequence spans 224 residues: MAQGLIEVERKFTPGPDTEERLQKLGATLEHRVTFRDTYYDTSELSLMLSDHWLRQREGSGWEFKCPGVTGVSGPHNEYVEVTSESAIVTQLFELLGSGEQETAGVAAVLGRLKLQEVASFITTRSSWKLALSGAHEEESLLTVDLDSTDFGYAVGEVEAVVHEKAEVPAALEKIISVSSMLGVPAQEKAPAKLLVYLQRFRPQDYQRLLEADSSGEATGDSVP.

Ala2 carries the post-translational modification N-acetylalanine. The CYTH domain maps to 5–201; it reads LIEVERKFTP…AKLLVYLQRF (197 aa). Mg(2+)-binding residues include Glu7 and Glu9. Substrate is bound by residues Lys11, Arg55, Arg57, Lys65, and Arg125. The Mg(2+) site is built by Asp145, Glu157, and Glu159. Glu157 is a substrate binding site. A substrate-binding site is contributed by Lys193.

Belongs to the ThTPase family. As to quaternary structure, monomer. Requires Mg(2+) as cofactor.

It localises to the cytoplasm. The enzyme catalyses thiamine triphosphate + H2O = thiamine diphosphate + phosphate + H(+). Its function is as follows. Hydrolase highly specific for thiamine triphosphate (ThTP). The protein is Thiamine-triphosphatase (Thtpa) of Rattus norvegicus (Rat).